Consider the following 133-residue polypeptide: Small ribosomal subunit protein uS9 (133 aa).

Belongs to the universal ribosomal protein uS9 family.

The chain is Small ribosomal subunit protein uS9 from Picrophilus torridus (strain ATCC 700027 / DSM 9790 / JCM 10055 / NBRC 100828 / KAW 2/3).